Reading from the N-terminus, the 173-residue chain is Nicotinamide-nucleotide adenylyltransferase (173 aa).

This sequence belongs to the archaeal NMN adenylyltransferase family.

The protein localises to the cytoplasm. It catalyses the reaction beta-nicotinamide D-ribonucleotide + ATP + H(+) = diphosphate + NAD(+). It participates in cofactor biosynthesis; NAD(+) biosynthesis; NAD(+) from nicotinamide D-ribonucleotide: step 1/1. The sequence is that of Nicotinamide-nucleotide adenylyltransferase from Methanosarcina barkeri (strain Fusaro / DSM 804).